Consider the following 251-residue polypeptide: Pyrroloquinoline-quinone synthase (251 aa).

It belongs to the PqqC family.

The enzyme catalyses 6-(2-amino-2-carboxyethyl)-7,8-dioxo-1,2,3,4,7,8-hexahydroquinoline-2,4-dicarboxylate + 3 O2 = pyrroloquinoline quinone + 2 H2O2 + 2 H2O + H(+). It functions in the pathway cofactor biosynthesis; pyrroloquinoline quinone biosynthesis. Functionally, ring cyclization and eight-electron oxidation of 3a-(2-amino-2-carboxyethyl)-4,5-dioxo-4,5,6,7,8,9-hexahydroquinoline-7,9-dicarboxylic-acid to PQQ. This Pseudomonas putida (strain W619) protein is Pyrroloquinoline-quinone synthase.